The following is a 92-amino-acid chain: Large ribosomal subunit protein eL31 (92 aa).

The protein belongs to the eukaryotic ribosomal protein eL31 family.

The protein is Large ribosomal subunit protein eL31 of Halorubrum lacusprofundi (strain ATCC 49239 / DSM 5036 / JCM 8891 / ACAM 34).